The sequence spans 709 residues: MPSLRQKVTTYFRQLSFIAEPREGRRRASEHEDDDGSFITKYLEGRMQRQFVEGPEIYNGQNPTDMPVLKLDTYEAGNCSITAACTGPDEGLTGIKRSKLHLSTSFADDIDFIDTQQENDDCYGVRRSTPPVQVATQNSTRLTSKFGRPPAGPRRQSSAEQPSGSASASGMRSRKNSKSSIANLAAASAGTDAGKANSDQNNRNVLNAKTEVSTDGDPNSERERLLREAVSNQGGSDPAALIAGVENWRMECDFAYGISVSLYETNMLTKEPMGNPIADCYGMVVRGDSAAMAMADGVNWGDGARLAARSAVHGCLDYLDRAVFGQALECRATTTQEVFVSLLRSLWEGHGCILEVGGALSTLTIAVVLPLDGAPGKYVVCSCNVGDSLGYVYSKKHGVRELTQASHDISSMRDMRDALGALGPADGNKPELSNLTFSMTCIESGDIVFLTSDGISDNFDPVVGKFAEAWTPDVKLQTSGHVKPANLAPKRQNKSASAIYARLHPSTPPTRPARQSKAESPPNNAPSRPKYMRSQTLIEPRQGLVSAPPPSVVPQRIPKSISGLPLVTGPQRHALTLYRLEDLLSYGINGTFSPCVSARRLCHLLIDFVRMITSARRKTLEQRELFYKLSTGPDGAKREVQLNRMQHRAARKRVVDSSAFVALPGKLDHATVMAYTVGGGEEHNNGNENGDGGAISPVLQSKEFKETNF.

3 disordered regions span residues aspartate 121–arginine 222, leucine 503–lysine 530, and glycine 678–phenylalanine 709. A compositionally biased stretch (polar residues) spans proline 130–threonine 143. The span at alanine 182–alanine 196 shows a compositional bias: low complexity. Residues asparagine 197–aspartate 217 show a composition bias toward polar residues. The PPM-type phosphatase domain occupies serine 259–leucine 503.

The protein is PP2C-like domain-containing protein CG9801 of Drosophila melanogaster (Fruit fly).